Here is an 802-residue protein sequence, read N- to C-terminus: Copal-8-ol diphosphate hydratase, chloroplastic (802 aa).

Residues 1–24 (MQVIITSSHRFFCHHLHQLKSPTS) constitute a chloroplast transit peptide. Lys-249 is a substrate binding site. Mg(2+)-binding residues include Asp-382 and Asp-384. The DXDD motif motif lies at 382–385 (DVDD). Substrate is bound at residue Lys-468.

Belongs to the terpene synthase family. It depends on Mg(2+) as a cofactor. In terms of tissue distribution, expressed specifically in the secretory cells of the glandular trichomes.

It is found in the plastid. Its subcellular location is the chloroplast. The catalysed reaction is (2E,6E,10E)-geranylgeranyl diphosphate + H2O = 8-hydroxycopalyl diphosphate. It participates in secondary metabolite biosynthesis; terpenoid biosynthesis. Class-II terpene synthase that synthesizes 8-hydroxy-copalyl diphosphate. Involved in the biosynthesis of cis-abienol, a labdane diterpene that can be used as synthesis precursor of ambergris substitution fragance products. The protein is Copal-8-ol diphosphate hydratase, chloroplastic of Nicotiana tabacum (Common tobacco).